A 39-amino-acid polypeptide reads, in one-letter code: MTMDRTSPIFTVRWLAVHGLAVPTVFFLGSISAMQFIQR.

Residues 14–30 form a helical membrane-spanning segment; sequence WLAVHGLAVPTVFFLGS. His18 provides a ligand contact to heme.

The protein belongs to the PsbE/PsbF family. Heterodimer of an alpha subunit and a beta subunit. PSII is composed of 1 copy each of membrane proteins PsbA, PsbB, PsbC, PsbD, PsbE, PsbF, PsbH, PsbI, PsbJ, PsbK, PsbL, PsbM, PsbT, PsbX, PsbY, PsbZ, Psb30/Ycf12, at least 3 peripheral proteins of the oxygen-evolving complex and a large number of cofactors. It forms dimeric complexes. The cofactor is heme b.

It localises to the plastid membrane. Functionally, this b-type cytochrome is tightly associated with the reaction center of photosystem II (PSII). PSII is a light-driven water:plastoquinone oxidoreductase that uses light energy to abstract electrons from H(2)O, generating O(2) and a proton gradient subsequently used for ATP formation. It consists of a core antenna complex that captures photons, and an electron transfer chain that converts photonic excitation into a charge separation. This is Cytochrome b559 subunit beta from Cuscuta europaea (European dodder).